Consider the following 123-residue polypeptide: Large ribosomal subunit protein uL18 (123 aa).

Belongs to the universal ribosomal protein uL18 family. As to quaternary structure, part of the 50S ribosomal subunit; part of the 5S rRNA/L5/L18/L25 subcomplex. Contacts the 5S and 23S rRNAs.

Functionally, this is one of the proteins that bind and probably mediate the attachment of the 5S RNA into the large ribosomal subunit, where it forms part of the central protuberance. This is Large ribosomal subunit protein uL18 from Chlamydia abortus (strain DSM 27085 / S26/3) (Chlamydophila abortus).